Here is a 604-residue protein sequence, read N- to C-terminus: UvrABC system protein C (604 aa).

Residues Glu14–Ile91 form the GIY-YIG domain. The 36-residue stretch at Glu202–Leu237 folds into the UVR domain. The tract at residues Gly538 to Gly557 is disordered.

This sequence belongs to the UvrC family. Interacts with UvrB in an incision complex.

The protein resides in the cytoplasm. Functionally, the UvrABC repair system catalyzes the recognition and processing of DNA lesions. UvrC both incises the 5' and 3' sides of the lesion. The N-terminal half is responsible for the 3' incision and the C-terminal half is responsible for the 5' incision. The chain is UvrABC system protein C from Chromohalobacter salexigens (strain ATCC BAA-138 / DSM 3043 / CIP 106854 / NCIMB 13768 / 1H11).